Here is a 169-residue protein sequence, read N- to C-terminus: MKRTKKYPFLTLQRQRFHLNFENASSAAGIPAERDFYRWAWSALKNEYRRADISLILLDEEEARAYNRDYRGKDYATNVLSFALNEGEILPCQVSEKLYGDLIICPQVVLKEAAEQGKTPEQHFAHLTIHGTLHLMGYDHIEDDEAEIMEAEEIRLMRAAGFPNPYQED.

Zn(2+) is bound by residues H130, H134, and H140.

The protein belongs to the endoribonuclease YbeY family. It depends on Zn(2+) as a cofactor.

Its subcellular location is the cytoplasm. In terms of biological role, single strand-specific metallo-endoribonuclease involved in late-stage 70S ribosome quality control and in maturation of the 3' terminus of the 16S rRNA. The chain is Endoribonuclease YbeY from Neisseria meningitidis serogroup B (strain ATCC BAA-335 / MC58).